We begin with the raw amino-acid sequence, 119 residues long: C-C motif chemokine 24 (119 aa).

The first 26 residues, 1 to 26, serve as a signal peptide directing secretion; sequence MAGSATIVAGLLLLVACACCIFPIDS. 2 disulfide bridges follow: Cys-33/Cys-58 and Cys-34/Cys-74. N-linked (GlcNAc...) asparagine glycosylation is found at Asn-54 and Asn-115. A disordered region spans residues 96 to 119; sequence PSKGAKAVRTKFAVQRRRGNSTEV. Basic residues predominate over residues 101-119; the sequence is KAVRTKFAVQRRRGNSTEV.

The protein belongs to the intercrine beta (chemokine CC) family. In terms of tissue distribution, highest expression in jejunum and spleen. Lower levels found in liver and lung. No expression detected in kidney, thymus, brain or testis.

Its subcellular location is the secreted. Functionally, chemotactic for resting T-lymphocytes, and eosinophils. Has lower chemotactic activity for neutrophils but none for monocytes and activated lymphocytes. Is a strong suppressor of colony formation by a multipotential hematopoietic progenitor cell line. Binds to CCR3. The polypeptide is C-C motif chemokine 24 (Mus musculus (Mouse)).